The sequence spans 89 residues: MIRKEFLVSGRVQGVGFRFFCKYQASLLSLTGYAENLDDGQVLIEVQGDESSIRKFKTKILNGNGFSRVISIDEKDLTVDTREKRFSTY.

The Acylphosphatase-like domain maps to arginine 3–tyrosine 89. Active-site residues include arginine 18 and asparagine 36.

The protein belongs to the acylphosphatase family.

It catalyses the reaction an acyl phosphate + H2O = a carboxylate + phosphate + H(+). The sequence is that of Acylphosphatase (acyP) from Clostridium perfringens (strain ATCC 13124 / DSM 756 / JCM 1290 / NCIMB 6125 / NCTC 8237 / Type A).